Consider the following 148-residue polypeptide: MAGIIFDDMFSVKSVDPDGKKFDRVSRYFCDAESFKMELIIDINSQIYPLKQNDKFRLVLATTLREDGLADEGEYDPKAEYPRIKQYEYVMYGKVYRLEDDDSGTDGGQLAAYASFGGLLMRLKGEAINLHGFEVDMNLYLLMKKTDF.

The segment at 16–40 is non-specific ssDNA binding; sequence DPDGKKFDRVSRYFCDAESFKMELI.

The protein belongs to the eukaryotic RPB8 RNA polymerase subunit family. As to quaternary structure, component of the RNA polymerase I (Pol I), RNA polymerase II (Pol II) and RNA polymerase III (Pol III) complexes consisting of at least 13, 12 and 17 subunits, respectively. Directly interacts with POLR2A.

The protein localises to the nucleus. Its function is as follows. DNA-dependent RNA polymerase catalyzes the transcription of DNA into RNA using the four ribonucleoside triphosphates as substrates. Common component of RNA polymerases I, II and III which synthesize ribosomal RNA precursors, mRNA precursors and many functional non-coding RNAs, and small RNAs, such as 5S rRNA and tRNAs, respectively. This chain is Probable DNA-directed RNA polymerases I, II, and III subunit RPABC3, found in Caenorhabditis briggsae.